The primary structure comprises 213 residues: Motile sperm domain-containing protein 1 (213 aa).

An MSP domain is found at 16-143 (PVFVFPTELI…KEHLTESVFF (128 aa)). 2 helical membrane passes run 159-179 (SLLT…PTLG) and 191-211 (LSVN…MAIL). The Nuclear export signal motif lies at 205 to 208 (LITM).

The protein localises to the endoplasmic reticulum membrane. It localises to the golgi apparatus membrane. Its function is as follows. Plays a role in differentiation and/or proliferation of mesenchymal stem cells. Proposed to be involved in epithelial-to-mesenchymal transition (EMT). However, another study suggests that it is not required for EMT or stem cell self-renewal and acts during later stages of differentiation. In Rattus norvegicus (Rat), this protein is Motile sperm domain-containing protein 1 (Mospd1).